The sequence spans 475 residues: Arginine/ornithine antiporter (475 aa).

The next 12 helical transmembrane spans lie at 10–30 (IGLL…GVFG), 42–62 (GPVL…ALSL), 74–94 (GIFS…SGWG), 101–121 (LGNV…FPIF), 157–177 (LVTI…IVLF), 205–225 (NCMM…MLSA), 238–258 (ILGL…PYGY), 283–303 (WGGY…WLSW), 333–353 (PTFA…TLLF), 361–381 (AYSL…AYQI), 397–417 (LLIG…AGVS), and 451–471 (WLIT…VVSG).

This sequence belongs to the amino acid-polyamine-organocation (APC) superfamily. Basic amino acid/polyamine antiporter (APA) (TC 2.A.3.2) family.

Its subcellular location is the cell membrane. The catalysed reaction is L-ornithine(in) + L-arginine(out) = L-ornithine(out) + L-arginine(in). Its function is as follows. Catalyzes electroneutral exchange between L-arginine and L-ornithine. In Latilactobacillus sakei (Lactobacillus sakei), this protein is Arginine/ornithine antiporter (arcD).